A 197-amino-acid polypeptide reads, in one-letter code: MIPIVIEESGRGERAFDIYSRLLRERIIFLGEAVTSDSANRIVAQMLFLEAEDPEKDIYLYINSPGGSVYDGLGIFDTMQHIKPDVHTVCVGLAASMGAFLLCAGTKGKRSSLQHSRIMIHQPLGGAQGQASDIRIQADEILFLKERLNKELSDRTGQTLDRIQQDTDRDFFMSPTEAMNYGLIDSVIDKRPVQAVA.

Catalysis depends on Ser-96, which acts as the Nucleophile. His-121 is a catalytic residue.

It belongs to the peptidase S14 family. As to quaternary structure, fourteen ClpP subunits assemble into 2 heptameric rings which stack back to back to give a disk-like structure with a central cavity, resembling the structure of eukaryotic proteasomes.

Its subcellular location is the cytoplasm. It catalyses the reaction Hydrolysis of proteins to small peptides in the presence of ATP and magnesium. alpha-casein is the usual test substrate. In the absence of ATP, only oligopeptides shorter than five residues are hydrolyzed (such as succinyl-Leu-Tyr-|-NHMec, and Leu-Tyr-Leu-|-Tyr-Trp, in which cleavage of the -Tyr-|-Leu- and -Tyr-|-Trp bonds also occurs).. Its function is as follows. Cleaves peptides in various proteins in a process that requires ATP hydrolysis. Has a chymotrypsin-like activity. Plays a major role in the degradation of misfolded proteins. This chain is ATP-dependent Clp protease proteolytic subunit 2, found in Synechococcus sp. (strain CC9605).